Here is a 291-residue protein sequence, read N- to C-terminus: MMYSFIARNKINTFLILFVFILACGGFGLLAGRFLGMSFFLFILLLAAGYACVQYFFSGRLAVLMSGARKISRNDNPRLWNTVENLSITTGLPMPEVYIVDDPAPNAFATGRDPKHAKVAATSGLLEILDDSELEGVMAHEMGHVKNYDIRVSTIVFGLVSAVGLISDMVLRALIWGDNRREGNSAFSFAIVLFFSLLAPIAAMLVQLAVSREREYLADATGALTTRYPAALASALAKLEGNARPLQRQSSSMAHLWISNPMPRGFFRKLFSTHPPTEERIRRLKEMGNQF.

A run of 2 helical transmembrane segments spans residues 11–31 (INTF…GLLA) and 34–54 (FLGM…ACVQ). Position 140 (His-140) interacts with Zn(2+). The active site involves Glu-141. Residue His-144 coordinates Zn(2+). The next 2 helical transmembrane spans lie at 155–175 (IVFG…RALI) and 186–206 (AFSF…AMLV). A Zn(2+)-binding site is contributed by Glu-215.

It belongs to the peptidase M48B family. The cofactor is Zn(2+).

Its subcellular location is the cell membrane. This Tropheryma whipplei (strain TW08/27) (Whipple's bacillus) protein is Protease HtpX homolog.